Consider the following 332-residue polypeptide: Beta-ketoacyl-[acyl-carrier-protein] synthase III 2 (332 aa).

Catalysis depends on residues Cys-115 and His-252. The tract at residues 253–257 (SANLR) is ACP-binding. Residue Asn-282 is part of the active site.

Belongs to the thiolase-like superfamily. FabH family. As to quaternary structure, homodimer.

Its subcellular location is the cytoplasm. It catalyses the reaction malonyl-[ACP] + acetyl-CoA + H(+) = 3-oxobutanoyl-[ACP] + CO2 + CoA. Its pathway is lipid metabolism; fatty acid biosynthesis. Its function is as follows. Catalyzes the condensation reaction of fatty acid synthesis by the addition to an acyl acceptor of two carbons from malonyl-ACP. Catalyzes the first condensation reaction which initiates fatty acid synthesis and may therefore play a role in governing the total rate of fatty acid production. Possesses both acetoacetyl-ACP synthase and acetyl transacylase activities. Its substrate specificity determines the biosynthesis of branched-chain and/or straight-chain of fatty acids. This is Beta-ketoacyl-[acyl-carrier-protein] synthase III 2 from Halalkalibacterium halodurans (strain ATCC BAA-125 / DSM 18197 / FERM 7344 / JCM 9153 / C-125) (Bacillus halodurans).